Reading from the N-terminus, the 209-residue chain is N-(5'-phosphoribosyl)anthranilate isomerase (209 aa).

Belongs to the TrpF family.

The catalysed reaction is N-(5-phospho-beta-D-ribosyl)anthranilate = 1-(2-carboxyphenylamino)-1-deoxy-D-ribulose 5-phosphate. It functions in the pathway amino-acid biosynthesis; L-tryptophan biosynthesis; L-tryptophan from chorismate: step 3/5. This is N-(5'-phosphoribosyl)anthranilate isomerase from Granulibacter bethesdensis (strain ATCC BAA-1260 / CGDNIH1).